Here is a 912-residue protein sequence, read N- to C-terminus: Cadherin-2 (912 aa).

Positions methionine 1–isoleucine 28 are cleaved as a signal peptide. Positions lysine 29–arginine 164 are excised as a propeptide. Cadherin domains follow at residues aspartate 165–phenylalanine 272, leucine 273–phenylalanine 387, threonine 388–phenylalanine 502, valine 503–proline 609, and glutamine 610–arginine 720. Over aspartate 165 to glycine 729 the chain is Extracellular. Ca(2+) contacts are provided by glutamate 175, aspartate 231, glutamate 233, aspartate 264, methionine 265, asparagine 266, aspartate 267, and asparagine 268. A glycan (N-linked (GlcNAc...) asparagine) is linked at asparagine 278. The Ca(2+) site is built by aspartate 298, aspartate 300, and asparagine 306. Asparagine 330 carries an N-linked (GlcNAc...) asparagine glycan. Aspartate 358 lines the Ca(2+) pocket. Residues asparagine 407, asparagine 578, asparagine 628, and asparagine 657 are each glycosylated (N-linked (GlcNAc...) asparagine). Residues alanine 730–methionine 752 traverse the membrane as a helical segment. Topologically, residues lysine 753 to aspartate 912 are cytoplasmic. A compositionally biased stretch (low complexity) spans serine 869–glycine 886. The tract at residues serine 869 to tyrosine 890 is disordered.

Homodimer (via extracellular region). Can also form heterodimers with other cadherins (via extracellular region). Dimerization occurs in trans, i.e. with a cadherin chain from another cell. Interacts with CTNNA2. In terms of tissue distribution, expressed at intercalated disks in the heart (at protein level).

Its subcellular location is the cell membrane. It is found in the sarcolemma. The protein resides in the cell junction. The protein localises to the cell surface. It localises to the desmosome. Its subcellular location is the adherens junction. Functionally, calcium-dependent cell adhesion protein; preferentially mediates homotypic cell-cell adhesion. Cadherins may thus contribute to the sorting of heterogeneous cell types, and thereby play an important role during embryonic development. Required for proper neurite branching, and pre- and postsynaptic organization. The sequence is that of Cadherin-2 (CDH2) from Gallus gallus (Chicken).